The primary structure comprises 152 residues: Large ribosomal subunit protein uL22 (152 aa).

It belongs to the universal ribosomal protein uL22 family. In terms of assembly, part of the 50S ribosomal subunit.

In terms of biological role, this protein binds specifically to 23S rRNA. It makes multiple contacts with different domains of the 23S rRNA in the assembled 50S subunit and ribosome. The globular domain of the protein is located near the polypeptide exit tunnel on the outside of the subunit, while an extended beta-hairpin is found that lines the wall of the exit tunnel in the center of the 70S ribosome. This is Large ribosomal subunit protein uL22 from Cenarchaeum symbiosum (strain A).